The sequence spans 927 residues: Sodium/calcium exchanger 3 (927 aa).

The N-terminal stretch at 1 to 30 (MAWLRLQPLTSAFLHFGLVTFVLFLNGLRA) is a signal peptide. The Extracellular segment spans residues 31 to 73 (EAGDLRDVPSAGQNNESCSGSSDCKEGVILPIWYPENPSLGDK). A glycan (N-linked (GlcNAc...) asparagine) is linked at N45. The chain crosses the membrane as a helical span at residues 74–94 (IARVIVYFVALIYMFLGVSII). Over 95-147 (ADRFMASIEVITSQEREVTIKKPNGETSTTTIRVWNETVSNLTLMALGSSAPE) the chain is Cytoplasmic. The stretch at 140–180 (ALGSSAPEILLSLIEVCGHGFIAGDLGPSTIVGSAAFNMFI) is one Alpha-1 repeat. Residues 148–168 (ILLSLIEVCGHGFIAGDLGPS) form a helical membrane-spanning segment. T169 is a topological domain (extracellular). A helical membrane pass occupies residues 170–190 (IVGSAAFNMFIIIGICVYVIP). Residues 191–202 (DGETRKIKHLRV) are Cytoplasmic-facing. Residues 203-223 (FFVTAAWSVFAYIWLYMILAV) form a helical membrane-spanning segment. Over 224–230 (FSPGVVQ) the chain is Extracellular. Residues 231 to 251 (VWEGLLTLFFFPVCVLLAWVA) form a helical membrane-spanning segment. Topologically, residues 252–726 (DKRLLFYKYM…DESGEERLPS (475 aa)) are cytoplasmic. Residues 253 to 272 (KRLLFYKYMHKRYRTDKHRG) are putative calmodulin-binding region. Calx-beta domains lie at 386-485 (VHTD…VRLS) and 519-619 (ATVT…IALG). Ca(2+) is bound by residues E409, D445, D470, D471, I473, E475, E478, D525, D526, D527, E543, D579, E606, E607, and E672. The helical transmembrane segment at 727–747 (CFDYVMHFLTVFWKVLFACVP) threads the bilayer. Residues 748-754 (PTEYCHG) lie on the Extracellular side of the membrane. The helical transmembrane segment at 755–775 (WACFVVSILIIGMLTAIIGDL) threads the bilayer. At 776–778 (ASH) the chain is on the cytoplasmic side. Residues 779 to 799 (FGCTIGLKDSVTAVVFVAFGT) form a helical membrane-spanning segment. Residues 796–832 (AFGTSVPDTFASKAAALQDVYADASIGNVTGSNAVNV) form an Alpha-2 repeat. At 800 to 828 (SVPDTFASKAAALQDVYADASIGNVTGSN) the chain is on the extracellular side. N823 is a glycosylation site (N-linked (GlcNAc...) asparagine). The chain crosses the membrane as a helical span at residues 829–849 (AVNVFLGIGLAWSVAAIYWAM). Over 850-860 (QGQEFHVSAGT) the chain is Cytoplasmic. Residues 861–881 (LAFSVTLFTIFAFVCLSVLLY) traverse the membrane as a helical segment. Residues 882 to 903 (RRRPHLGGELGGPRGCKLATTW) lie on the Extracellular side of the membrane. A helical membrane pass occupies residues 904-924 (LFVSLWLLYVLFATLEAYCYI). Residues 925 to 927 (KGF) lie on the Cytoplasmic side of the membrane.

Belongs to the Ca(2+):cation antiporter (CaCA) (TC 2.A.19) family. SLC8 subfamily. In terms of assembly, interacts with AKAP1. Detected in neurons in brain cortex and hippocampus. Detected in pyramidal cell bodies and processes, in granule cells and interneurons in the CA1 and CA3 region of the hippocampus. Detected on astrocyte processes in brain cortex. Detected on endothelial cells in hippocampus capillaries (at protein level). Restricted to brain and skeletal muscle.

The protein resides in the cell membrane. It is found in the perikaryon. The protein localises to the cell projection. Its subcellular location is the dendrite. It localises to the dendritic spine. The protein resides in the sarcolemma. It is found in the cytoplasm. The protein localises to the sarcoplasm. Its subcellular location is the cell junction. It localises to the mitochondrion outer membrane. The protein resides in the endoplasmic reticulum membrane. It is found in the perinuclear region. It carries out the reaction Ca(2+)(in) + 3 Na(+)(out) = Ca(2+)(out) + 3 Na(+)(in). Calcium transport is down-regulated by Na(+) and stimulated by Ca(2+). In terms of biological role, mediates the electrogenic exchange of Ca(2+) against Na(+) ions across the cell membrane, and thereby contributes to the regulation of cytoplasmic Ca(2+) levels and Ca(2+)-dependent cellular processes. Contributes to cellular Ca(2+) homeostasis in excitable cells, both in muscle and in brain. In a first phase, voltage-gated channels mediate the rapid increase of cytoplasmic Ca(2+) levels due to release of Ca(2+) stores from the endoplasmic reticulum. SLC8A3 mediates the export of Ca(2+) from the cell during the next phase, so that cytoplasmic Ca(2+) levels rapidly return to baseline. Contributes to Ca(2+) transport during excitation-contraction coupling in muscle. In neurons, contributes to the rapid decrease of cytoplasmic Ca(2+) levels back to baseline after neuronal activation, and thereby contributes to modulate synaptic plasticity, learning and memory. Required for normal oligodendrocyte differentiation and for normal myelination. Mediates Ca(2+) efflux from mitochondria and contributes to mitochondrial Ca(2+) ion homeostasis. This Rattus norvegicus (Rat) protein is Sodium/calcium exchanger 3 (Slc8a3).